The following is a 208-amino-acid chain: 3-isopropylmalate dehydratase small subunit 2 (208 aa).

A disordered region spans residues 163–208 (EGERLDNASTSAGHGHAGTPLGDDPAKEDGPRPEQASGHQKEEHHA).

Belongs to the LeuD family. LeuD type 2 subfamily. In terms of assembly, heterodimer of LeuC and LeuD.

It catalyses the reaction (2R,3S)-3-isopropylmalate = (2S)-2-isopropylmalate. It participates in amino-acid biosynthesis; L-leucine biosynthesis; L-leucine from 3-methyl-2-oxobutanoate: step 2/4. Functionally, catalyzes the isomerization between 2-isopropylmalate and 3-isopropylmalate, via the formation of 2-isopropylmaleate. This Deinococcus radiodurans (strain ATCC 13939 / DSM 20539 / JCM 16871 / CCUG 27074 / LMG 4051 / NBRC 15346 / NCIMB 9279 / VKM B-1422 / R1) protein is 3-isopropylmalate dehydratase small subunit 2 (leuD2).